A 170-amino-acid chain; its full sequence is Metalloproteinase inhibitor 4 (170 aa).

The NTR domain maps to 1–105; the sequence is ISSEKVVPAS…SLNHHYHLNC (105 aa). Involved in metalloproteinase-binding stretches follow at residues 6–9 and 48–49; these read VVPA and SS. 3 disulfide bridges follow: Cys-107/Cys-154, Cys-112/Cys-117, and Cys-125/Cys-146.

This sequence belongs to the protease inhibitor I35 (TIMP) family.

Its subcellular location is the secreted. In terms of biological role, complexes with metalloproteinases (such as collagenases) and irreversibly inactivates them by binding to their catalytic zinc cofactor. This chain is Metalloproteinase inhibitor 4 (TIMP4), found in Oryctolagus cuniculus (Rabbit).